The following is a 253-amino-acid chain: Imidazole glycerol phosphate synthase subunit HisF (253 aa).

Catalysis depends on residues Asp11 and Asp130.

Belongs to the HisA/HisF family. Heterodimer of HisH and HisF.

The protein resides in the cytoplasm. The catalysed reaction is 5-[(5-phospho-1-deoxy-D-ribulos-1-ylimino)methylamino]-1-(5-phospho-beta-D-ribosyl)imidazole-4-carboxamide + L-glutamine = D-erythro-1-(imidazol-4-yl)glycerol 3-phosphate + 5-amino-1-(5-phospho-beta-D-ribosyl)imidazole-4-carboxamide + L-glutamate + H(+). The protein operates within amino-acid biosynthesis; L-histidine biosynthesis; L-histidine from 5-phospho-alpha-D-ribose 1-diphosphate: step 5/9. Its function is as follows. IGPS catalyzes the conversion of PRFAR and glutamine to IGP, AICAR and glutamate. The HisF subunit catalyzes the cyclization activity that produces IGP and AICAR from PRFAR using the ammonia provided by the HisH subunit. This is Imidazole glycerol phosphate synthase subunit HisF from Acidithiobacillus ferrooxidans (strain ATCC 23270 / DSM 14882 / CIP 104768 / NCIMB 8455) (Ferrobacillus ferrooxidans (strain ATCC 23270)).